Here is a 127-residue protein sequence, read N- to C-terminus: Nuclear transport factor 2 (127 aa).

At Lys-4 the chain carries N6-acetyllysine. Residues 10 to 121 enclose the NTF2 domain; that stretch reads IGSSFIQHYY…WVCTNDMFRL (112 aa).

Homodimer. Interacts with RAN (GDP-bound form); the interaction is direct and regulates RAN nuclear import. Interacts with the nucleoporins NUP54, NUP58 and NUP62 (via FG repeats); recruits NUTF2 to the nuclear pore complex a step required for NUTF2-mediated GDP-bound RAN nuclear import. Interacts with CAPG; mediates its nuclear import.

The protein resides in the cytoplasm. The protein localises to the cytosol. It is found in the nucleus outer membrane. Its subcellular location is the nucleus. It localises to the nuclear pore complex. The protein resides in the nucleus inner membrane. The protein localises to the nucleoplasm. In terms of biological role, mediates the import of GDP-bound RAN from the cytoplasm into the nucleus which is essential for the function of RAN in cargo receptor-mediated nucleocytoplasmic transport. Thereby, plays indirectly a more general role in cargo receptor-mediated nucleocytoplasmic transport. Interacts with GDP-bound RAN in the cytosol, recruits it to the nuclear pore complex via its interaction with nucleoporins and promotes its nuclear import. In Bos taurus (Bovine), this protein is Nuclear transport factor 2.